We begin with the raw amino-acid sequence, 422 residues long: MSLVCFPFKEEDVAVVVRNVECAAAHPRVSTVLCVGYSKGETWCAIEAKRPSIESSTGKRIILLQQKRIGVSLRSGKGDGMNTALAYFLDHTELKRIHFYDSDIVSFSADWITKAERQADLDFDVVRHYFPRSSTDAMITWFVTKIGFCLLWPKTVLPFIEQPLGGELLLTRKAAEALYTDHRVRGQSDWGIDTLYTFIMVQKGLHLAEVYIPEGKVHALYSGLRDLRTMLVECFSAMQSLKDEAVPLNEGTHRMEYTRPVPELVKQKVGYDVEKTLKLLRSNWTQGQRDLLQKHFDPALAKGLLNASEWPTWGFADEEAWVAAYRTLLVHFEKGDEDWEELLFKIWVSRVLNHTMRHSLRGYDAALDALRSLIWETQHQSAMLSKSAAANHHIVSGHSASEALPRTAGQLREKRMDAACAV.

Residues 7 to 11 (PFKEE), Q66, K77, D101, and 101 to 102 (DS) contribute to the GDP-alpha-D-mannose site. (R)-glycerate contacts are provided by residues R132 and 137 to 140 (AMIT). GDP-alpha-D-mannose-binding residues include L164, D193, and Y221.

It belongs to the glycosyltransferase 78 family.

It carries out the reaction (R)-glycerate + GDP-alpha-D-mannose = (2R)-2-O-(alpha-D-mannosyl)-glycerate + GDP + H(+). The enzyme catalyses GDP-alpha-D-glucose + (R)-glycerate = (2R)-2-O-(alpha-D-glucopyranosyl)-glycerate + GDP + H(+). With respect to regulation, activity is not dependent on divalent cations, but it is enhanced by Mg(2+). In terms of biological role, involved in the biosynthesis of the compatible solute alpha-D-mannosyl-glycerate (MG). Catalyzes the condensation of GDP-alpha-D-mannose (GDP-Man) with D-glycerate to produce alpha-D-mannosyl-glycerate. Can also use GDP-alpha-D-glucose (GDP-Glc) as sugar donor to produce alpha-D-glucopyranosyl-glycerate (GG). This chain is Mannosylglycerate synthase, found in Selaginella moellendorffii (Spikemoss).